The following is a 137-amino-acid chain: Large ribosomal subunit protein uL16 (137 aa).

It belongs to the universal ribosomal protein uL16 family. In terms of assembly, part of the 50S ribosomal subunit.

Binds 23S rRNA and is also seen to make contacts with the A and possibly P site tRNAs. This Francisella tularensis subsp. tularensis (strain FSC 198) protein is Large ribosomal subunit protein uL16.